Consider the following 420-residue polypeptide: G2/mitotic-specific cyclin-A (420 aa).

Positions 64 to 93 are disordered; sequence VQGSRIQPTRAAKEKLKPPQNISDSQLVND. The span at 83-93 shows a compositional bias: polar residues; it reads QNISDSQLVND.

This sequence belongs to the cyclin family. Cyclin AB subfamily.

Its function is as follows. Essential for the control of the cell cycle at the G2/M (mitosis) transition. Interacts with the CDC2 and CDK2 protein kinases to form MPF. G2/M cyclins accumulate steadily during G2 and are abruptly destroyed at mitosis. In Hydra viridissima (Green hydra), this protein is G2/mitotic-specific cyclin-A.